We begin with the raw amino-acid sequence, 277 residues long: Orotidine 5'-phosphate decarboxylase (277 aa).

Lys93 serves as the catalytic Proton donor.

The protein belongs to the OMP decarboxylase family. Type 2 subfamily.

It catalyses the reaction orotidine 5'-phosphate + H(+) = UMP + CO2. It participates in pyrimidine metabolism; UMP biosynthesis via de novo pathway; UMP from orotate: step 2/2. This Haloarcula marismortui (strain ATCC 43049 / DSM 3752 / JCM 8966 / VKM B-1809) (Halobacterium marismortui) protein is Orotidine 5'-phosphate decarboxylase.